Here is a 296-residue protein sequence, read N- to C-terminus: 4-hydroxybenzoate octaprenyltransferase (296 aa).

Helical transmembrane passes span 28 to 48 (PIGI…AAEG), 52 to 72 (LSHV…GCAI), 102 to 122 (ALIL…CTNA), 146 to 166 (YYPQ…TFTA), 169 to 189 (GELP…TVGY), 219 to 239 (VIIL…GARF), 241 to 261 (LGGW…WEFW), and 275 to 295 (FLHN…DYAL).

Belongs to the UbiA prenyltransferase family. It depends on Mg(2+) as a cofactor.

Its subcellular location is the cell inner membrane. It carries out the reaction all-trans-octaprenyl diphosphate + 4-hydroxybenzoate = 4-hydroxy-3-(all-trans-octaprenyl)benzoate + diphosphate. It functions in the pathway cofactor biosynthesis; ubiquinone biosynthesis. In terms of biological role, catalyzes the prenylation of para-hydroxybenzoate (PHB) with an all-trans polyprenyl group. Mediates the second step in the final reaction sequence of ubiquinone-8 (UQ-8) biosynthesis, which is the condensation of the polyisoprenoid side chain with PHB, generating the first membrane-bound Q intermediate 3-octaprenyl-4-hydroxybenzoate. The chain is 4-hydroxybenzoate octaprenyltransferase from Pseudomonas fluorescens (strain ATCC BAA-477 / NRRL B-23932 / Pf-5).